We begin with the raw amino-acid sequence, 1072 residues long: Carbamoyl phosphate synthase large chain (1072 aa).

The segment at 1–401 is carboxyphosphate synthetic domain; sequence MPKRLDINTI…SLLKAVRSLE (401 aa). Arg-129, Arg-169, Gly-175, Gly-176, Lys-208, Ile-210, Glu-215, Gly-241, Val-242, His-243, Gln-284, and Glu-298 together coordinate ATP. Residues 133-327 enclose the ATP-grasp 1 domain; the sequence is RTLMQELNEP…IAKLAAKIAV (195 aa). Positions 284, 298, and 300 each coordinate Mg(2+). 3 residues coordinate Mn(2+): Gln-284, Glu-298, and Asn-300. Positions 402 to 546 are oligomerization domain; the sequence is LGIYHLELDH…YSTYADENES (145 aa). The segment at 547–929 is carbamoyl phosphate synthetic domain; it reads IVTDRKSVVV…ALYKGLVASG (383 aa). Residues 671 to 861 enclose the ATP-grasp 2 domain; it reads EAALTKLGIP…MANVATKVIL (191 aa). ATP is bound by residues Arg-707, Arg-746, Glu-752, Gly-777, Val-778, His-779, Ser-780, Gln-820, and Glu-832. Mg(2+) contacts are provided by Gln-820, Glu-832, and Asn-834. Residues Gln-820, Glu-832, and Asn-834 each coordinate Mn(2+). Residues 930–1072 form the MGS-like domain; that stretch reads INIPTHGSVI…QTKRHEVVHA (143 aa). The allosteric domain stretch occupies residues 930 to 1072; that stretch reads INIPTHGSVI…QTKRHEVVHA (143 aa).

The protein belongs to the CarB family. Composed of two chains; the small (or glutamine) chain promotes the hydrolysis of glutamine to ammonia, which is used by the large (or ammonia) chain to synthesize carbamoyl phosphate. Tetramer of heterodimers (alpha,beta)4. The cofactor is Mg(2+). It depends on Mn(2+) as a cofactor.

The enzyme catalyses hydrogencarbonate + L-glutamine + 2 ATP + H2O = carbamoyl phosphate + L-glutamate + 2 ADP + phosphate + 2 H(+). It catalyses the reaction hydrogencarbonate + NH4(+) + 2 ATP = carbamoyl phosphate + 2 ADP + phosphate + 2 H(+). The protein operates within amino-acid biosynthesis; L-arginine biosynthesis; carbamoyl phosphate from bicarbonate: step 1/1. It functions in the pathway pyrimidine metabolism; UMP biosynthesis via de novo pathway; (S)-dihydroorotate from bicarbonate: step 1/3. Its function is as follows. Large subunit of the glutamine-dependent carbamoyl phosphate synthetase (CPSase). CPSase catalyzes the formation of carbamoyl phosphate from the ammonia moiety of glutamine, carbonate, and phosphate donated by ATP, constituting the first step of 2 biosynthetic pathways, one leading to arginine and/or urea and the other to pyrimidine nucleotides. The large subunit (synthetase) binds the substrates ammonia (free or transferred from glutamine from the small subunit), hydrogencarbonate and ATP and carries out an ATP-coupled ligase reaction, activating hydrogencarbonate by forming carboxy phosphate which reacts with ammonia to form carbamoyl phosphate. The polypeptide is Carbamoyl phosphate synthase large chain (Bacillus thuringiensis (strain Al Hakam)).